The primary structure comprises 386 residues: Citrate synthase (386 aa).

Catalysis depends on residues His266 and Asp322.

This sequence belongs to the citrate synthase family.

It catalyses the reaction oxaloacetate + acetyl-CoA + H2O = citrate + CoA + H(+). The protein operates within carbohydrate metabolism; tricarboxylic acid cycle; isocitrate from oxaloacetate: step 1/2. This chain is Citrate synthase (gltA), found in Acidithiobacillus ferridurans.